A 457-amino-acid polypeptide reads, in one-letter code: Glycerol-3-phosphate acyltransferase 3 (457 aa).

The helical transmembrane segment at 14 to 34 threads the bilayer; that stretch reads WLTLVGSLILLPSAFGLSLGI. Serine 68 and serine 77 each carry phosphoserine. A run of 2 helical transmembrane segments spans residues 137-157 and 161-181; these read ISPK…CFLL and VTLA…VGQL. The HXXXXD motif motif lies at 229-234; it reads HTSPID. The disordered stretch occupies residues 429–457; it reads GNGSPSLALDSSTVDNHGSPEPAFRSESL. Over residues 431-444 the composition is skewed to polar residues; sequence GSPSLALDSSTVDN.

Belongs to the 1-acyl-sn-glycerol-3-phosphate acyltransferase family.

It is found in the endoplasmic reticulum membrane. It carries out the reaction sn-glycerol 3-phosphate + an acyl-CoA = a 1-acyl-sn-glycero-3-phosphate + CoA. It catalyses the reaction a 1-acyl-sn-glycero-3-phosphate + an acyl-CoA = a 1,2-diacyl-sn-glycero-3-phosphate + CoA. The catalysed reaction is dodecanoyl-CoA + sn-glycerol 3-phosphate = 1-dodecanoyl-sn-glycerol 3-phosphate + CoA. The enzyme catalyses sn-glycerol 3-phosphate + hexadecanoyl-CoA = 1-hexadecanoyl-sn-glycero-3-phosphate + CoA. It carries out the reaction sn-glycerol 3-phosphate + (9Z)-octadecenoyl-CoA = 1-(9Z-octadecenoyl)-sn-glycero-3-phosphate + CoA. It catalyses the reaction (9Z,12Z)-octadecadienoyl-CoA + sn-glycerol 3-phosphate = 1-(9Z,12Z)-octadecadienoyl-sn-glycero-3-phosphate + CoA. The catalysed reaction is 1-tetradecanoyl-sn-glycerol 3-phosphate + (9Z)-octadecenoyl-CoA = 1-tetradecanoyl-2-(9Z)-octadecenoyl-sn-glycero-3-phosphate + CoA. The enzyme catalyses 1-hexadecanoyl-sn-glycero-3-phosphate + (9Z)-octadecenoyl-CoA = 1-hexadecanoyl-2-(9Z-octadecenoyl)-sn-glycero-3-phosphate + CoA. It carries out the reaction 1-(9Z-octadecenoyl)-sn-glycero-3-phosphate + (9Z)-octadecenoyl-CoA = 1,2-di-(9Z-octadecenoyl)-sn-glycero-3-phosphate + CoA. It catalyses the reaction 1-(6Z,9Z,12Z-octadecatrienoyl)-sn-glycero-3-phosphate + (9Z)-octadecenoyl-CoA = (6Z,9Z,12Z)-octadecatrienoyl-2-(9Z)-octadecenoyl-sn-glycero-3-phosphate + CoA. The catalysed reaction is 1-(9Z,12Z,15Z)-octadecatrienoyl-sn-glycero-3-phosphate + (9Z)-octadecenoyl-CoA = 1-(9Z,12Z,15Z)-octadecatrienoyl-2-(9Z)-octadecenoyl-sn-glycero-3-phosphate + CoA. The enzyme catalyses 1-(9Z-octadecenoyl)-sn-glycero-3-phosphate + tetradecanoyl-CoA = 1-(9Z)-octadecenoyl-2-tetradecanoyl-sn-glycero-3-phosphate + CoA. It carries out the reaction 1-(9Z-octadecenoyl)-sn-glycero-3-phosphate + hexadecanoyl-CoA = 1-(9Z)-octadecenoyl-2-hexadecanoyl-sn-glycero-3-phosphate + CoA. It catalyses the reaction 1-(9Z-octadecenoyl)-sn-glycero-3-phosphate + octadecanoyl-CoA = 1-(9Z-octadecenoyl)-2-octadecanoyl-sn-glycero-3-phosphate + CoA. The catalysed reaction is 1-(9Z-octadecenoyl)-sn-glycero-3-phosphate + (9Z,12Z)-octadecadienoyl-CoA = 1-(9Z)-octadecenoyl-2-(9Z,12Z)-octadecadienoyl-sn-glycero-3-phosphate + CoA. The enzyme catalyses 1-(5Z,8Z,11Z,14Z-eicosatetraenoyl)-sn-glycero-3-phosphate + (9Z)-octadecenoyl-CoA = 1-(5Z,8Z,11Z,14Z)-eicosatetraenoyl-2-(9Z)-octadecenoyl-sn-glycero-3-phosphate + CoA. It participates in glycerolipid metabolism; triacylglycerol biosynthesis. Its pathway is phospholipid metabolism; CDP-diacylglycerol biosynthesis; CDP-diacylglycerol from sn-glycerol 3-phosphate: step 1/3. Its function is as follows. Converts glycerol-3-phosphate to 1-acyl-sn-glycerol-3-phosphate (lysophosphatidic acid or LPA) by incorporating an acyl moiety at the sn-1 position of the glycerol backbone. Also converts LPA into 1,2-diacyl-sn-glycerol-3-phosphate (phosphatidic acid or PA) by incorporating an acyl moiety at the sn-2 position of the glycerol backbone. Protects cells against lipotoxicity. The chain is Glycerol-3-phosphate acyltransferase 3 from Rattus norvegicus (Rat).